We begin with the raw amino-acid sequence, 98 residues long: UPF0175 protein VNG_0066H (98 aa).

Belongs to the UPF0175 family.

This Halobacterium salinarum (strain ATCC 700922 / JCM 11081 / NRC-1) (Halobacterium halobium) protein is UPF0175 protein VNG_0066H.